The primary structure comprises 258 residues: Peptide methionine sulfoxide reductase A4, chloroplastic (258 aa).

A chloroplast-targeting transit peptide spans 1–53; the sequence is MQVLVVSPPLIAAASLSKPLNSLSKAALSFSRAKPICPFPQTSRRPISVYKSP. At M54 the chain carries N-acetylmethionine. The segment at 62-89 is disordered; sequence GFGSRPQAQADPSSAAIAQGPDDDVPSS. Phosphoserine is present on S245.

Belongs to the MsrA Met sulfoxide reductase family. As to expression, expressed in rosette and cauline leaves, and at lower levels in stems and flowers (at protein level).

It is found in the plastid. The protein resides in the chloroplast stroma. It carries out the reaction L-methionyl-[protein] + [thioredoxin]-disulfide + H2O = L-methionyl-(S)-S-oxide-[protein] + [thioredoxin]-dithiol. The catalysed reaction is [thioredoxin]-disulfide + L-methionine + H2O = L-methionine (S)-S-oxide + [thioredoxin]-dithiol. In terms of biological role, catalyzes the reduction of methionine sulfoxide (MetSO) to methionine in proteins. Plays a protective role against oxidative stress by restoring activity to proteins that have been inactivated by methionine oxidation. Prevents the methionine sulfoxidation of the heat shock protein HSP21 and its subsequent inactivation. MSRA family specifically reduces the MetSO S-enantiomer. The chain is Peptide methionine sulfoxide reductase A4, chloroplastic (MSR4) from Arabidopsis thaliana (Mouse-ear cress).